A 412-amino-acid polypeptide reads, in one-letter code: CCA-adding enzyme (412 aa).

ATP-binding residues include Ser-41 and Lys-44. Positions 41 and 44 each coordinate CTP. Mg(2+) is bound by residues Asp-53, Asp-55, and Asp-106. Positions 129, 149, and 158 each coordinate ATP. Residues His-129, Lys-149, and Tyr-158 each coordinate CTP.

This sequence belongs to the tRNA nucleotidyltransferase/poly(A) polymerase family. Archaeal CCA-adding enzyme subfamily. As to quaternary structure, homodimer. It depends on Mg(2+) as a cofactor.

It catalyses the reaction a tRNA precursor + 2 CTP + ATP = a tRNA with a 3' CCA end + 3 diphosphate. The catalysed reaction is a tRNA with a 3' CCA end + 2 CTP + ATP = a tRNA with a 3' CCACCA end + 3 diphosphate. In terms of biological role, catalyzes the addition and repair of the essential 3'-terminal CCA sequence in tRNAs without using a nucleic acid template. Adds these three nucleotides in the order of C, C, and A to the tRNA nucleotide-73, using CTP and ATP as substrates and producing inorganic pyrophosphate. tRNA 3'-terminal CCA addition is required both for tRNA processing and repair. Also involved in tRNA surveillance by mediating tandem CCA addition to generate a CCACCA at the 3' terminus of unstable tRNAs. While stable tRNAs receive only 3'-terminal CCA, unstable tRNAs are marked with CCACCA and rapidly degraded. The polypeptide is CCA-adding enzyme (Saccharolobus islandicus (strain Y.N.15.51 / Yellowstone #2) (Sulfolobus islandicus)).